Reading from the N-terminus, the 1103-residue chain is Detocs histidine-protein kinase DtcA (1103 aa).

Phosphohistidine; by autocatalysis is present on H758. The stretch at 818 to 851 (TIINDAKEKVHINTGEFIESAKVFNYAIEIEFVE) is one TPR repeat.

Post-translationally, autophosphorylated.

The catalysed reaction is ATP + protein L-histidine = ADP + protein N-phospho-L-histidine.. Functionally, sensor-kinase member of the two-component regulatory system Detocs that confers resistance to bacteriophage. When the system (DtcA-DtcB-DtcC) is expressed in a susceptible E.coli (strain MG1655) it confers resistance to bacteriophages T2, T4, T5, T7, SECphi4, SECphi6 and SECphi27; the level of resistance varies, resistance to T2, T7 and SECphi4 is not very high. DtcA (this subunit) probably autophosphorylates upon sensing viral infection, and subsequently transfers the phosphate signal to DtcC which activates it, leading to an antiviral defense; DtcB may scavenge phosphorylation signals from accidental activation of DtcA. The chain is Detocs histidine-protein kinase DtcA from Enterobacter cloacae (strain JD6301).